We begin with the raw amino-acid sequence, 343 residues long: 4-hydroxy-2-oxovalerate aldolase 4 (343 aa).

The region spanning 8–260 (VTVHDMTLRD…ETGVDVAKIT (253 aa)) is the Pyruvate carboxyltransferase domain. 16-17 (RD) provides a ligand contact to substrate. Aspartate 17 is a binding site for Mn(2+). The active-site Proton acceptor is histidine 20. Serine 170 and histidine 199 together coordinate substrate. Mn(2+) is bound by residues histidine 199 and histidine 201. A substrate-binding site is contributed by tyrosine 290.

Belongs to the 4-hydroxy-2-oxovalerate aldolase family.

It carries out the reaction (S)-4-hydroxy-2-oxopentanoate = acetaldehyde + pyruvate. In Dechloromonas aromatica (strain RCB), this protein is 4-hydroxy-2-oxovalerate aldolase 4.